The sequence spans 336 residues: MEDAVRKLLNSADHEVLALANDARAIEQLKVRFLGRKGELARLFKEMGKVPEAERPAVGKVLNEAKVRLEALFAEALERGGEQGAGRREQIDITVPGRRPPRGRLHPISQVAREVCRIFNWLGFEIVEGPEVELDYYNFEALNIPRDHPARDMQDTFYVSDDVVLRTHTSPLQVRTMEKRRPPIRVIAPGKTYRCDSDVTHTPMFHQVEGLMVGKDISFGDLKGILTIFVHQMFGADVGLRFRPSFFPFTEPSAEVDIQCVMCKGEGCRVCSQTGWLEILGSGMVDPEVFRMVGYDPEEVTGFAFGMGIERITMLKYGIDDLRLFFENDFRFLRQF.

E251 provides a ligand contact to Mg(2+).

Belongs to the class-II aminoacyl-tRNA synthetase family. Phe-tRNA synthetase alpha subunit type 1 subfamily. As to quaternary structure, tetramer of two alpha and two beta subunits. Mg(2+) serves as cofactor.

The protein resides in the cytoplasm. The catalysed reaction is tRNA(Phe) + L-phenylalanine + ATP = L-phenylalanyl-tRNA(Phe) + AMP + diphosphate + H(+). This chain is Phenylalanine--tRNA ligase alpha subunit, found in Syntrophobacter fumaroxidans (strain DSM 10017 / MPOB).